We begin with the raw amino-acid sequence, 126 residues long: uncharacterized protein (126 aa).

The region spanning Cys20–Leu118 is the HTH hxlR-type domain.

This is an uncharacterized protein from Escherichia coli (strain K12).